Here is a 379-residue protein sequence, read N- to C-terminus: MVSLYLENGLFLQVQSFGASGTQVGELVFNTSMSGYQEVISDPSYKGQFVIFSMPEIGVVGANSKDDESFFSSAGILVRHYNEFFSNSRADFSLSAYLKERGVLGICGVDTRSLIKTLRHHGCLMMVASTIEHDKNKLEEILKNAPRISHTPLVASVSTPKIITHQRATFDFKTLDYKPFDEKNSHKTIAVLDFGAKGNILNELQNVGLKALIYPHHTKANELIKAYEKKEIHGIFLSNGPGDPLSLQQEIGEIKQLIGAKIPMFGICLGHQLLSIAQGYPTYKLKFGHHGSNHPVKNLETNAVEITAQNHNYCVPEAIEKIATITHRNLFDNTIEGVHYKNAPIISVQHHPESSPGPKESHYIFKEFVKLLENFPTRE.

The interval 1 to 184 (MVSLYLENGL…LDYKPFDEKN (184 aa)) is CPSase. Ser-44, Gly-240, and Gly-242 together coordinate L-glutamine. In terms of domain architecture, Glutamine amidotransferase type-1 spans 188-378 (TIAVLDFGAK…VKLLENFPTR (191 aa)). The active-site Nucleophile is Cys-268. Residues Leu-269, Gln-272, Asn-310, and Tyr-313 each coordinate L-glutamine. Residues His-351 and Glu-353 contribute to the active site.

The protein belongs to the CarA family. Composed of two chains; the small (or glutamine) chain promotes the hydrolysis of glutamine to ammonia, which is used by the large (or ammonia) chain to synthesize carbamoyl phosphate. Tetramer of heterodimers (alpha,beta)4.

The enzyme catalyses hydrogencarbonate + L-glutamine + 2 ATP + H2O = carbamoyl phosphate + L-glutamate + 2 ADP + phosphate + 2 H(+). It catalyses the reaction L-glutamine + H2O = L-glutamate + NH4(+). It participates in amino-acid biosynthesis; L-arginine biosynthesis; carbamoyl phosphate from bicarbonate: step 1/1. The protein operates within pyrimidine metabolism; UMP biosynthesis via de novo pathway; (S)-dihydroorotate from bicarbonate: step 1/3. In terms of biological role, small subunit of the glutamine-dependent carbamoyl phosphate synthetase (CPSase). CPSase catalyzes the formation of carbamoyl phosphate from the ammonia moiety of glutamine, carbonate, and phosphate donated by ATP, constituting the first step of 2 biosynthetic pathways, one leading to arginine and/or urea and the other to pyrimidine nucleotides. The small subunit (glutamine amidotransferase) binds and cleaves glutamine to supply the large subunit with the substrate ammonia. This Helicobacter acinonychis (strain Sheeba) protein is Carbamoyl phosphate synthase small chain.